An 85-amino-acid chain; its full sequence is UPF0512 protein U (85 aa).

Belongs to the UPF0512 family.

In Dictyostelium discoideum (Social amoeba), this protein is UPF0512 protein U.